Reading from the N-terminus, the 142-residue chain is Photosystem II extrinsic protein U (142 aa).

An N-terminal signal peptide occupies residues Met1–Ala29.

It belongs to the PsbU family. As to quaternary structure, PSII is composed of 1 copy each of membrane proteins PsbA, PsbB, PsbC, PsbD, PsbE, PsbF, PsbH, PsbI, PsbJ, PsbK, PsbL, PsbM, PsbT, PsbX, PsbY, PsbZ, Psb30/Ycf12, peripheral proteins PsbO, CyanoQ (PsbQ), PsbU, PsbV and a large number of cofactors. It forms dimeric complexes.

Its subcellular location is the cellular thylakoid membrane. Functionally, one of the extrinsic, lumenal subunits of photosystem II (PSII). PSII is a light-driven water plastoquinone oxidoreductase, using light energy to abstract electrons from H(2)O, generating a proton gradient subsequently used for ATP formation. The extrinsic proteins stabilize the structure of photosystem II oxygen-evolving complex (OEC), the ion environment of oxygen evolution and protect the OEC against heat-induced inactivation. The chain is Photosystem II extrinsic protein U from Trichormus variabilis (strain ATCC 29413 / PCC 7937) (Anabaena variabilis).